The primary structure comprises 620 residues: UPF0313 protein BT_0254 (620 aa).

The Radical SAM core domain occupies 311-591; that stretch reads AYDMIKFSVN…AQRQFFFWYK (281 aa). [4Fe-4S] cluster contacts are provided by Cys325, Cys329, and Cys332.

It belongs to the UPF0313 family. The cofactor is [4Fe-4S] cluster.

This chain is UPF0313 protein BT_0254, found in Bacteroides thetaiotaomicron (strain ATCC 29148 / DSM 2079 / JCM 5827 / CCUG 10774 / NCTC 10582 / VPI-5482 / E50).